A 275-amino-acid polypeptide reads, in one-letter code: Large ribosomal subunit protein uL2 (275 aa).

Over residues 38-53 (SSKAGRNNNGRITTRH) the composition is skewed to polar residues. 2 disordered regions span residues 38–59 (SSKAGRNNNGRITTRHQGGGHK) and 224–257 (AMNPIDHPHGGGEGRTAAGRDPVSPWGTPTKGFR).

This sequence belongs to the universal ribosomal protein uL2 family. Part of the 50S ribosomal subunit. Forms a bridge to the 30S subunit in the 70S ribosome.

One of the primary rRNA binding proteins. Required for association of the 30S and 50S subunits to form the 70S ribosome, for tRNA binding and peptide bond formation. It has been suggested to have peptidyltransferase activity; this is somewhat controversial. Makes several contacts with the 16S rRNA in the 70S ribosome. In Burkholderia multivorans (strain ATCC 17616 / 249), this protein is Large ribosomal subunit protein uL2.